A 263-amino-acid polypeptide reads, in one-letter code: Probable septum site-determining protein MinC (263 aa).

Residues 107-159 (LPPSGARERPLDIKDSAPRKPAEEPSPSAGEARPEPAKAEEKPADPVSRPTKV) form a disordered region. Basic and acidic residues-rich tracts occupy residues 112 to 129 (ARER…KPAE) and 138 to 150 (ARPE…EKPA).

Belongs to the MinC family. Interacts with MinD and FtsZ.

Cell division inhibitor that blocks the formation of polar Z ring septums. Rapidly oscillates between the poles of the cell to destabilize FtsZ filaments that have formed before they mature into polar Z rings. Prevents FtsZ polymerization. This is Probable septum site-determining protein MinC from Pseudomonas aeruginosa (strain UCBPP-PA14).